Consider the following 117-residue polypeptide: MSAPQTFVPEPVQVTENALAKVKALIEEEGNPDLKLRVFVTGGGCSGFQYGFAFDEACAEDDAKIERDGVTVVVDAMSYPYLVGAQVDYEEGLKGSKFVVANPNASTTCGCGSSFSI.

Residues C45, C109, and C111 each coordinate iron-sulfur cluster.

This sequence belongs to the HesB/IscA family. In terms of assembly, homodimer. Requires iron-sulfur cluster as cofactor.

Its function is as follows. Required for insertion of 4Fe-4S clusters for at least IspG. This is Iron-sulfur cluster insertion protein ErpA from Saccharophagus degradans (strain 2-40 / ATCC 43961 / DSM 17024).